A 432-amino-acid chain; its full sequence is Enolase (432 aa).

Residue Q167 coordinates (2R)-2-phosphoglycerate. E209 serves as the catalytic Proton donor. Positions 246, 290, and 317 each coordinate Mg(2+). The (2R)-2-phosphoglycerate site is built by K342, R371, S372, and K393. K342 (proton acceptor) is an active-site residue.

This sequence belongs to the enolase family. As to quaternary structure, component of the RNA degradosome, a multiprotein complex involved in RNA processing and mRNA degradation. It depends on Mg(2+) as a cofactor.

It localises to the cytoplasm. Its subcellular location is the secreted. It is found in the cell surface. The catalysed reaction is (2R)-2-phosphoglycerate = phosphoenolpyruvate + H2O. The protein operates within carbohydrate degradation; glycolysis; pyruvate from D-glyceraldehyde 3-phosphate: step 4/5. In terms of biological role, catalyzes the reversible conversion of 2-phosphoglycerate (2-PG) into phosphoenolpyruvate (PEP). It is essential for the degradation of carbohydrates via glycolysis. This chain is Enolase, found in Salmonella dublin (strain CT_02021853).